We begin with the raw amino-acid sequence, 150 residues long: uncharacterized protein (150 aa).

Residues L5 to G66 enclose the HTH asnC-type domain. Positions I24–K43 form a DNA-binding region, H-T-H motif.

This is an uncharacterized protein from Pyrococcus furiosus (strain ATCC 43587 / DSM 3638 / JCM 8422 / Vc1).